Here is a 450-residue protein sequence, read N- to C-terminus: Nicotinamide phosphoribosyltransferase (450 aa).

R210 contacts diphosphate. D233 provides a ligand contact to beta-nicotinamide D-ribonucleotide. Diphosphate is bound by residues H249 and R310. Residues 310-312 (RAD), 364-365 (GD), and R403 contribute to the beta-nicotinamide D-ribonucleotide site.

It belongs to the NAPRTase family.

The enzyme catalyses beta-nicotinamide D-ribonucleotide + diphosphate = 5-phospho-alpha-D-ribose 1-diphosphate + nicotinamide + H(+). It participates in cofactor biosynthesis; NAD(+) biosynthesis; nicotinamide D-ribonucleotide from 5-phospho-alpha-D-ribose 1-diphosphate and nicotinamide: step 1/1. Its function is as follows. Catalyzes the condensation of nicotinamide with 5-phosphoribosyl-1-pyrophosphate to yield nicotinamide mononucleotide, an intermediate in the biosynthesis of NAD. This chain is Nicotinamide phosphoribosyltransferase, found in Mycoplasma genitalium (strain ATCC 33530 / DSM 19775 / NCTC 10195 / G37) (Mycoplasmoides genitalium).